A 297-amino-acid chain; its full sequence is Homoserine kinase (297 aa).

An ATP-binding site is contributed by proline 79–alanine 89.

It belongs to the GHMP kinase family. Homoserine kinase subfamily.

Its subcellular location is the cytoplasm. The enzyme catalyses L-homoserine + ATP = O-phospho-L-homoserine + ADP + H(+). Its pathway is amino-acid biosynthesis; L-threonine biosynthesis; L-threonine from L-aspartate: step 4/5. Catalyzes the ATP-dependent phosphorylation of L-homoserine to L-homoserine phosphate. The polypeptide is Homoserine kinase (Pyrobaculum neutrophilum (strain DSM 2338 / JCM 9278 / NBRC 100436 / V24Sta) (Thermoproteus neutrophilus)).